A 179-amino-acid chain; its full sequence is Large ribosomal subunit protein uL5 (179 aa).

This sequence belongs to the universal ribosomal protein uL5 family. As to quaternary structure, part of the 50S ribosomal subunit; part of the 5S rRNA/L5/L18/L25 subcomplex. Contacts the 5S rRNA and the P site tRNA. Forms a bridge to the 30S subunit in the 70S ribosome.

Functionally, this is one of the proteins that bind and probably mediate the attachment of the 5S RNA into the large ribosomal subunit, where it forms part of the central protuberance. In the 70S ribosome it contacts protein S13 of the 30S subunit (bridge B1b), connecting the 2 subunits; this bridge is implicated in subunit movement. Contacts the P site tRNA; the 5S rRNA and some of its associated proteins might help stabilize positioning of ribosome-bound tRNAs. The polypeptide is Large ribosomal subunit protein uL5 (Oceanobacillus iheyensis (strain DSM 14371 / CIP 107618 / JCM 11309 / KCTC 3954 / HTE831)).